Here is a 97-residue protein sequence, read N- to C-terminus: Small ribosomal subunit protein bS20 (97 aa).

A compositionally biased stretch (basic residues) spans 76 to 85 (RNNGARKKAG). The segment at 76 to 97 (RNNGARKKAGLAKALQKVSQAS) is disordered. A compositionally biased stretch (low complexity) spans 86–97 (LAKALQKVSQAS).

Belongs to the bacterial ribosomal protein bS20 family.

Binds directly to 16S ribosomal RNA. This chain is Small ribosomal subunit protein bS20, found in Microcystis aeruginosa (strain NIES-843 / IAM M-2473).